The primary structure comprises 159 residues: Protein-export protein SecB (159 aa).

It belongs to the SecB family. Homotetramer, a dimer of dimers. One homotetramer interacts with 1 SecA dimer.

The protein localises to the cytoplasm. One of the proteins required for the normal export of preproteins out of the cell cytoplasm. It is a molecular chaperone that binds to a subset of precursor proteins, maintaining them in a translocation-competent state. It also specifically binds to its receptor SecA. In Burkholderia vietnamiensis (strain G4 / LMG 22486) (Burkholderia cepacia (strain R1808)), this protein is Protein-export protein SecB.